An 89-amino-acid chain; its full sequence is Small ribosomal subunit protein uS15 (89 aa).

The protein belongs to the universal ribosomal protein uS15 family. In terms of assembly, part of the 30S ribosomal subunit. Forms a bridge to the 50S subunit in the 70S ribosome, contacting the 23S rRNA.

In terms of biological role, one of the primary rRNA binding proteins, it binds directly to 16S rRNA where it helps nucleate assembly of the platform of the 30S subunit by binding and bridging several RNA helices of the 16S rRNA. Functionally, forms an intersubunit bridge (bridge B4) with the 23S rRNA of the 50S subunit in the ribosome. The chain is Small ribosomal subunit protein uS15 from Corynebacterium diphtheriae (strain ATCC 700971 / NCTC 13129 / Biotype gravis).